The sequence spans 186 residues: Intraflagellar transport protein 27 homolog (186 aa).

Residues 12-19 (GDPAVGKT), 64-68 (DSAGK), and 123-126 (NKTD) contribute to the GTP site.

This sequence belongs to the small GTPase superfamily. Rab family. In terms of assembly, component of the IFT complex B, at least composed of IFT20, IFT25, IFT27, IFT52, IFT57, IFT74, IFT81, IFT88 and TRAF3IP1. Interacts with IFT25. Interacts with IFT70B. Interacts with RABL2/RABL2A; binding is equal in the presence of GTP or GDP. Interacts with ARL6; recognizes and binds with the GTP-free form of ARL6.

The protein resides in the cell projection. It is found in the cilium. It localises to the cytoplasm. Its subcellular location is the flagellum. Small GTPase-like component of the intraflagellar transport (IFT) complex B that promotes the exit of the BBSome complex from cilia via its interaction with ARL6. Not involved in entry of the BBSome complex into cilium. Prevents aggregation of GTP-free ARL6. Required for hedgehog signaling. Forms a subcomplex within the IFT complex B with IFT25. Its role in intraflagellar transport is mainly seen in tissues rich in ciliated cells such as kidney and testis. Essential for male fertility, spermiogenesis and sperm flagella formation. Plays a role in the early development of the kidney. May be involved in the regulation of ureteric bud initiation. The chain is Intraflagellar transport protein 27 homolog (IFT27) from Homo sapiens (Human).